We begin with the raw amino-acid sequence, 316 residues long: Meiotically up-regulated gene 154 protein (316 aa).

The next 4 helical transmembrane spans lie at 41–61, 88–108, 159–179, and 186–206; these read YSIP…IYIK, AFLS…FIFS, FLLN…WFYS, and LLTF…SLLL. The interval 291 to 316 is disordered; it reads HDSGISRDSSSPFKRFPHLSDGSSRF.

It is found in the endoplasmic reticulum membrane. In terms of biological role, has a role in meiosis. This is Meiotically up-regulated gene 154 protein (mug154) from Schizosaccharomyces pombe (strain 972 / ATCC 24843) (Fission yeast).